Here is a 124-residue protein sequence, read N- to C-terminus: Small ribosomal subunit protein uS13 (124 aa).

Residues 99 to 124 are disordered; the sequence is PCRGQKTKTNARTCKGPKKTVANKKK. Over residues 113–124 the composition is skewed to basic residues; sequence KGPKKTVANKKK.

Belongs to the universal ribosomal protein uS13 family. Part of the 30S ribosomal subunit. Forms a loose heterodimer with protein S19. Forms two bridges to the 50S subunit in the 70S ribosome.

In terms of biological role, located at the top of the head of the 30S subunit, it contacts several helices of the 16S rRNA. In the 70S ribosome it contacts the 23S rRNA (bridge B1a) and protein L5 of the 50S subunit (bridge B1b), connecting the 2 subunits; these bridges are implicated in subunit movement. Contacts the tRNAs in the A and P-sites. The chain is Small ribosomal subunit protein uS13 from Lachnospira eligens (strain ATCC 27750 / DSM 3376 / VPI C15-48 / C15-B4) (Eubacterium eligens).